Here is a 450-residue protein sequence, read N- to C-terminus: D-inositol 3-phosphate glycosyltransferase (450 aa).

H26 is a 1D-myo-inositol 3-phosphate binding site. Residues 32-33 and G40 each bind UDP-N-acetyl-alpha-D-glucosamine; that span reads QP. Residues 37-42, K95, Y128, T152, and R172 contribute to the 1D-myo-inositol 3-phosphate site; that span reads DAGGMN. UDP-N-acetyl-alpha-D-glucosamine is bound by residues R246, K251, and Q313. Mg(2+) contacts are provided by Y322, R323, and A325. Residues E335 and E343 each contribute to the UDP-N-acetyl-alpha-D-glucosamine site. T349 provides a ligand contact to Mg(2+).

This sequence belongs to the glycosyltransferase group 1 family. MshA subfamily. As to quaternary structure, homodimer.

The catalysed reaction is 1D-myo-inositol 3-phosphate + UDP-N-acetyl-alpha-D-glucosamine = 1D-myo-inositol 2-acetamido-2-deoxy-alpha-D-glucopyranoside 3-phosphate + UDP + H(+). In terms of biological role, catalyzes the transfer of a N-acetyl-glucosamine moiety to 1D-myo-inositol 3-phosphate to produce 1D-myo-inositol 2-acetamido-2-deoxy-glucopyranoside 3-phosphate in the mycothiol biosynthesis pathway. In Mycolicibacterium vanbaalenii (strain DSM 7251 / JCM 13017 / BCRC 16820 / KCTC 9966 / NRRL B-24157 / PYR-1) (Mycobacterium vanbaalenii), this protein is D-inositol 3-phosphate glycosyltransferase.